Reading from the N-terminus, the 1377-residue chain is DNA-directed RNA polymerase subunit beta' (1377 aa).

Positions 60, 62, 75, and 78 each coordinate Zn(2+). Mg(2+) contacts are provided by aspartate 449, aspartate 451, and aspartate 453. The Zn(2+) site is built by cysteine 777, cysteine 851, cysteine 858, and cysteine 861.

Belongs to the RNA polymerase beta' chain family. As to quaternary structure, the RNAP catalytic core consists of 2 alpha, 1 beta, 1 beta' and 1 omega subunit. When a sigma factor is associated with the core the holoenzyme is formed, which can initiate transcription. Mg(2+) serves as cofactor. Zn(2+) is required as a cofactor.

It carries out the reaction RNA(n) + a ribonucleoside 5'-triphosphate = RNA(n+1) + diphosphate. DNA-dependent RNA polymerase catalyzes the transcription of DNA into RNA using the four ribonucleoside triphosphates as substrates. The chain is DNA-directed RNA polymerase subunit beta' from Borreliella burgdorferi (strain ZS7) (Borrelia burgdorferi).